Here is a 387-residue protein sequence, read N- to C-terminus: GTP-binding protein 10 (387 aa).

The Obg domain maps to 13–148; sequence GNFIDNLRLF…RVIHLDLKLI (136 aa). The 196-residue stretch at 149–344 folds into the OBG-type G domain; the sequence is ADIGLVGFPN…LKNCIRKSLD (196 aa). GTP is bound by residues 155 to 162, 202 to 206, and 278 to 281; these read GFPNAGKS, DLPGL, and NKMD.

It belongs to the TRAFAC class OBG-HflX-like GTPase superfamily. OBG GTPase family.

It is found in the nucleus. Its subcellular location is the nucleolus. In terms of biological role, may be involved in the ribosome maturation process. This is GTP-binding protein 10 (GTPBP10) from Bos taurus (Bovine).